The primary structure comprises 400 residues: Putative F-box protein At1g30920 (400 aa).

The region spanning 4–49 is the F-box domain; the sequence is EENTDSIPIDLILDILSRLPSKSIARCRCVSKLWESMIRQSYFTEL.

This is Putative F-box protein At1g30920 from Arabidopsis thaliana (Mouse-ear cress).